Here is a 348-residue protein sequence, read N- to C-terminus: Protein RecA (348 aa).

69 to 76 lines the ATP pocket; that stretch reads GPESSGKT.

Belongs to the RecA family.

The protein localises to the cytoplasm. Functionally, can catalyze the hydrolysis of ATP in the presence of single-stranded DNA, the ATP-dependent uptake of single-stranded DNA by duplex DNA, and the ATP-dependent hybridization of homologous single-stranded DNAs. It interacts with LexA causing its activation and leading to its autocatalytic cleavage. This chain is Protein RecA, found in Gluconacetobacter polyoxogenes (Acetobacter polyoxogenes).